The sequence spans 752 residues: Probable cell surface ferric reductase kap2 (752 aa).

The chain crosses the membrane as a helical span at residues 40–60; that stretch reads GKYGLGWVYFSVILLAISTII. 2 N-linked (GlcNAc...) asparagine glycosylation sites follow: asparagine 118 and asparagine 133. The next 2 membrane-spanning stretches (helical) occupy residues 157–177 and 195–215; these read IGFPSLGASSIILAALIFVTL and PPLAIRAGMIAVAMIPWIIAL. The region spanning 201–348 is the Ferric oxidoreductase domain; that stretch reads AGMIAVAMIP…WATVAIWMLS (148 aa). Heme is bound by residues histidine 237 and histidine 251. The next 3 membrane-spanning stretches (helical) occupy residues 241–261, 281–301, and 306–326; these read GYLCLFLSLIHMVPFYVTPIW, GTGWAALVPLIVLCLHSLPIL, and YELFKLVHLPLSIIFLAMIFW. Histidine 313 and histidine 327 together coordinate heme. Residues 331–351 traverse the membrane as a helical segment; sequence FLASWDYLWATVAIWMLSYAV. Residues 349–475 enclose the FAD-binding FR-type domain; sequence YAVRLFYVNW…EGPYGGMKRD (127 aa). Residue asparagine 357 is glycosylated (N-linked (GlcNAc...) asparagine). 467–470 is a binding site for NADP(+); the sequence is GPYG. Residues 482–502 form a helical membrane-spanning segment; sequence VVFFAGGSGITATASHLLNLI. An N-linked (GlcNAc...) asparagine glycan is attached at asparagine 627. 714-715 contacts NADP(+); sequence CG.

It belongs to the ferric reductase (FRE) family. Requires FAD as cofactor. It depends on heme as a cofactor.

The protein resides in the cell membrane. It catalyses the reaction 2 a Fe(II)-siderophore + NADP(+) + H(+) = 2 a Fe(III)-siderophore + NADPH. Its function is as follows. Probable cell surface ferric reductase that acts as a negative regulatory factor of growth and development. Involved in kojic acid production through the regulation of kojA expression. The sequence is that of Probable cell surface ferric reductase kap2 from Aspergillus oryzae (strain ATCC 42149 / RIB 40) (Yellow koji mold).